The chain runs to 109 residues: Large ribosomal subunit protein uL24 (109 aa).

This sequence belongs to the universal ribosomal protein uL24 family. In terms of assembly, part of the 50S ribosomal subunit.

In terms of biological role, one of two assembly initiator proteins, it binds directly to the 5'-end of the 23S rRNA, where it nucleates assembly of the 50S subunit. One of the proteins that surrounds the polypeptide exit tunnel on the outside of the subunit. The polypeptide is Large ribosomal subunit protein uL24 (Geotalea uraniireducens (strain Rf4) (Geobacter uraniireducens)).